Consider the following 153-residue polypeptide: 6,7-dimethyl-8-ribityllumazine synthase (153 aa).

Residues phenylalanine 21, 55–57 (AFE), and 79–81 (TVI) each bind 5-amino-6-(D-ribitylamino)uracil. A (2S)-2-hydroxy-3-oxobutyl phosphate-binding site is contributed by 84–85 (AT). Catalysis depends on histidine 87, which acts as the Proton donor. 5-amino-6-(D-ribitylamino)uracil is bound at residue phenylalanine 112. Arginine 126 serves as a coordination point for (2S)-2-hydroxy-3-oxobutyl phosphate.

The protein belongs to the DMRL synthase family. Forms an icosahedral capsid composed of 60 subunits, arranged as a dodecamer of pentamers.

The enzyme catalyses (2S)-2-hydroxy-3-oxobutyl phosphate + 5-amino-6-(D-ribitylamino)uracil = 6,7-dimethyl-8-(1-D-ribityl)lumazine + phosphate + 2 H2O + H(+). It participates in cofactor biosynthesis; riboflavin biosynthesis; riboflavin from 2-hydroxy-3-oxobutyl phosphate and 5-amino-6-(D-ribitylamino)uracil: step 1/2. Catalyzes the formation of 6,7-dimethyl-8-ribityllumazine by condensation of 5-amino-6-(D-ribitylamino)uracil with 3,4-dihydroxy-2-butanone 4-phosphate. This is the penultimate step in the biosynthesis of riboflavin. This chain is 6,7-dimethyl-8-ribityllumazine synthase, found in Bacillus cereus (strain B4264).